The sequence spans 324 residues: Olfactory receptor 11H4 (324 aa).

The Extracellular portion of the chain corresponds to 1–35 (MSFFFVDLRPMNRSATHIVTEFILLGFPGCWKIQI). Residue Asn12 is glycosylated (N-linked (GlcNAc...) asparagine). Residues 36-56 (FLFSLFLVIYVLTLLGNGAII) form a helical membrane-spanning segment. At 57-64 (YAVRCNPL) the chain is on the cytoplasmic side. The helical transmembrane segment at 65–85 (LHTPMYFLLGNFAFLEIWYVS) threads the bilayer. At 86-109 (STIPNMLVNILSKTKAISFSGCFL) the chain is on the extracellular side. Cysteines 107 and 199 form a disulfide. The chain crosses the membrane as a helical span at residues 110 to 130 (QFYFFFSLGTTECLFLAVMAY). Over 131–149 (DRYLAICHPLQYPAIMTVR) the chain is Cytoplasmic. Residues 150–170 (FCGKLVSFCWLIGFLGYPIPI) traverse the membrane as a helical segment. Residues 171-207 (FYISQLPFCGPNIIDHFLCDMDPLMALSCAPAPITEC) lie on the Extracellular side of the membrane. Residues 208–227 (IFYTQSSLVLFFTSMYILRS) form a helical membrane-spanning segment. Residues 228-247 (YILLLTAVFQVPSAAGRRKA) are Cytoplasmic-facing. Residues 248–268 (FSTCGSHLVVVSLFYGTVMVM) form a helical membrane-spanning segment. Residues 269–281 (YVSPTYGIPTLLQ) are Extracellular-facing. The helical transmembrane segment at 282-302 (KILTLVYSVTTPLFNPLIYTL) threads the bilayer. Topologically, residues 303-324 (RNKDMKLALRNVLFGMRIRQNS) are cytoplasmic.

It belongs to the G-protein coupled receptor 1 family.

The protein resides in the cell membrane. Its function is as follows. Odorant receptor. This is Olfactory receptor 11H4 (OR11H4) from Homo sapiens (Human).